Here is a 212-residue protein sequence, read N- to C-terminus: Golgi SNAP receptor complex member 2 (212 aa).

Met1 is subject to N-acetylmethionine. Over 1–190 (MEPLYQQTNK…LIEKRAFQDK (190 aa)) the chain is Cytoplasmic. A coiled-coil region spans residues 60–92 (LNRRQNAKLRVDQLKYDVQHLQTALRNFQHRRQ). An IxM motif; signal for cargo packaging into COPII-coated vesicles motif is present at residues 118-120 (IPM). Residues 191–211 (YFMIGGMLLTCAVMFLVVQYL) form a helical; Anchor for type IV membrane protein membrane-spanning segment. A topological domain (vesicular) is located at residue Thr212.

It belongs to the GOSR2 family. As to quaternary structure, part of a unique SNARE complex composed of the Golgi SNAREs GOSR1, STX5 and YKT6. Interacts with BET1.

The protein resides in the golgi apparatus. It is found in the cis-Golgi network membrane. Its subcellular location is the golgi apparatus membrane. The protein localises to the endoplasmic reticulum membrane. Its function is as follows. Involved in transport of proteins from the cis/medial-Golgi to the trans-Golgi network. This chain is Golgi SNAP receptor complex member 2 (Gosr2), found in Mus musculus (Mouse).